The sequence spans 279 residues: Tumor protein p63-regulated gene 1 protein (279 aa).

The interval 1-49 (MSTIGSFDGFQPVSLKQEEEDQPSENDHLSTKEGNSGKDPGSRRISRQQ) is disordered. Residues 72–259 (VTRPGAIETA…ILIETYTGLM (188 aa)) form the hSac2 domain.

Belongs to the TPRG1 family. Highly expressed in skin. Also detected at low levels in tongue and esophagus.

Its subcellular location is the cytoplasm. In Mus musculus (Mouse), this protein is Tumor protein p63-regulated gene 1 protein.